Consider the following 229-residue polypeptide: Thiamine import ATP-binding protein ThiQ (229 aa).

Residues 2–229 (LHLENIRVRQ…NNAEPLRPWM (228 aa)) enclose the ABC transporter domain. 32–39 (GASGSGKS) contacts ATP.

The protein belongs to the ABC transporter superfamily. Thiamine importer (TC 3.A.1.19.1) family. In terms of assembly, the complex is composed of two ATP-binding proteins (ThiQ), two transmembrane proteins (ThiP) and a solute-binding protein (ThiB).

The protein resides in the cell inner membrane. It carries out the reaction thiamine(out) + ATP + H2O = thiamine(in) + ADP + phosphate + H(+). Functionally, part of the ABC transporter complex ThiBPQ involved in thiamine import. Responsible for energy coupling to the transport system. The polypeptide is Thiamine import ATP-binding protein ThiQ (Jannaschia sp. (strain CCS1)).